The sequence spans 416 residues: Creatine kinase U-type, mitochondrial (416 aa).

A mitochondrion-targeting transit peptide spans 1-39; sequence MAGPFSRLLSARPGLRLLALAGAGSLAAGFLLRPEPIRA. The interval 40 to 63 is cardiolipin-binding; sequence ASERRRQYPPSAEYPDLRKHNNCM. One can recognise a Phosphagen kinase N-terminal domain in the interval 44-131; sequence RRQYPPSAEY…FDPVIQERHN (88 aa). Ser-151 is modified (phosphoserine). The Phosphagen kinase C-terminal domain maps to 158–400; the sequence is YVLSSRVRTG…NYLIDCERRL (243 aa). Residue 161-165 participates in ATP binding; sequence SSRVR. Phosphoserine is present on Ser-196. Residue Thr-213 is modified to Phosphothreonine. ATP is bound at residue His-224. Residue Ser-232 is modified to Phosphoserine. Residues Arg-269, Arg-325, and 353–358 contribute to the ATP site; that span reads RGTGGV. Residue Thr-355 is modified to Phosphothreonine. Position 365 is a phosphoserine (Ser-365). Residue Asp-368 participates in ATP binding.

This sequence belongs to the ATP:guanido phosphotransferase family. Exists as an octamer composed of four MTCK homodimers.

It localises to the mitochondrion inner membrane. It carries out the reaction creatine + ATP = N-phosphocreatine + ADP + H(+). Its function is as follows. Reversibly catalyzes the transfer of phosphate between ATP and various phosphogens (e.g. creatine phosphate). Creatine kinase isoenzymes play a central role in energy transduction in tissues with large, fluctuating energy demands, such as skeletal muscle, heart, brain and spermatozoa. The sequence is that of Creatine kinase U-type, mitochondrial (CKMT1) from Sus scrofa (Pig).